The sequence spans 191 residues: ATP synthase subunit b 2 (191 aa).

Residues 1–12 (MAESHGEAKGGE) are compositionally biased toward basic and acidic residues. The segment at 1–31 (MAESHGEAKGGEAKGTASAHTEAEGGHGFPP) is disordered. The chain crosses the membrane as a helical span at residues 38–60 (PSQIASLVIAFVALYVIVSRVAL).

It belongs to the ATPase B chain family. As to quaternary structure, F-type ATPases have 2 components, F(1) - the catalytic core - and F(0) - the membrane proton channel. F(1) has five subunits: alpha(3), beta(3), gamma(1), delta(1), epsilon(1). F(0) has three main subunits: a(1), b(2) and c(10-14). The alpha and beta chains form an alternating ring which encloses part of the gamma chain. F(1) is attached to F(0) by a central stalk formed by the gamma and epsilon chains, while a peripheral stalk is formed by the delta and b chains.

The protein resides in the cell inner membrane. Its function is as follows. F(1)F(0) ATP synthase produces ATP from ADP in the presence of a proton or sodium gradient. F-type ATPases consist of two structural domains, F(1) containing the extramembraneous catalytic core and F(0) containing the membrane proton channel, linked together by a central stalk and a peripheral stalk. During catalysis, ATP synthesis in the catalytic domain of F(1) is coupled via a rotary mechanism of the central stalk subunits to proton translocation. Component of the F(0) channel, it forms part of the peripheral stalk, linking F(1) to F(0). The b'-subunit is a diverged and duplicated form of b found in plants and photosynthetic bacteria. This Bradyrhizobium sp. (strain ORS 278) protein is ATP synthase subunit b 2 (atpF2).